The following is a 206-amino-acid chain: Probable chemoreceptor glutamine deamidase CheD 1 (206 aa).

Belongs to the CheD family.

It catalyses the reaction L-glutaminyl-[protein] + H2O = L-glutamyl-[protein] + NH4(+). Probably deamidates glutamine residues to glutamate on methyl-accepting chemotaxis receptors (MCPs), playing an important role in chemotaxis. In Shewanella oneidensis (strain ATCC 700550 / JCM 31522 / CIP 106686 / LMG 19005 / NCIMB 14063 / MR-1), this protein is Probable chemoreceptor glutamine deamidase CheD 1.